Here is a 178-residue protein sequence, read N- to C-terminus: Peptidyl-prolyl cis-trans isomerase H (178 aa).

Residues 14–177 form the PPIase cyclophilin-type domain; the sequence is FFDISIGDVP…LPVKITECGQ (164 aa).

It belongs to the cyclophilin-type PPIase family. PPIase H subfamily.

The protein localises to the nucleus. The catalysed reaction is [protein]-peptidylproline (omega=180) = [protein]-peptidylproline (omega=0). PPIases accelerate the folding of proteins. It catalyzes the cis-trans isomerization of proline imidic peptide bonds in oligopeptides. This chain is Peptidyl-prolyl cis-trans isomerase H (cyp7), found in Rhizopus delemar (strain RA 99-880 / ATCC MYA-4621 / FGSC 9543 / NRRL 43880) (Mucormycosis agent).